The primary structure comprises 463 residues: Glycine--tRNA ligase (463 aa).

Residues arginine 98 and glutamate 174 each coordinate substrate. ATP contacts are provided by residues 206-208, 216-221, 290-291, and 334-337; these read RNE, FRTREF, EL, and GADR. 221-225 contributes to the substrate binding site; that stretch reads FEQME. 330–334 contacts substrate; sequence EPSLG.

The protein belongs to the class-II aminoacyl-tRNA synthetase family. In terms of assembly, homodimer.

Its subcellular location is the cytoplasm. The enzyme catalyses tRNA(Gly) + glycine + ATP = glycyl-tRNA(Gly) + AMP + diphosphate. Its function is as follows. Catalyzes the attachment of glycine to tRNA(Gly). In Staphylococcus epidermidis (strain ATCC 35984 / DSM 28319 / BCRC 17069 / CCUG 31568 / BM 3577 / RP62A), this protein is Glycine--tRNA ligase.